The sequence spans 282 residues: uncharacterized protein (282 aa).

The N-acetyltransferase domain maps to 5 to 140; that stretch reads DELIKLHEEH…SFQPYTKKLD (136 aa).

It belongs to the acetyltransferase family.

This is an uncharacterized protein from Bacillus subtilis (strain 168).